A 1904-amino-acid chain; its full sequence is Callose synthase 10 (1904 aa).

The stretch at 100–132 is one HAT 1 repeat; it reads VIKQKLAKRDGASIDRDRDIERLWEFYKLYKRR. Transmembrane regions (helical) follow at residues 491 to 511, 532 to 552, 562 to 582, 594 to 614, 661 to 681, and 722 to 742; these read SFIR…IIAF, AIMN…AYSM, VIRF…YVKV, FFFH…LIFG, YVAF…FLQI, and VLAI…AIIG. The stretch at 678-701 is one LRR 1 repeat; the sequence is FLQIKPLVKPTNTIIHLPPFQYSW. 2 LRR repeats span residues 751–774 and 925–948; these read LGEI…FAQN and TLNL…LIRN. The HAT 2 repeat unit spans residues 1074 to 1107; the sequence is YSSSELRSENEDGISILFYLQKIFPDEWENFLER. Residues 1159–1181 form an LRR 4 repeat; it reads FLERRGLGVDDASLTNMPRGFES. A run of 9 helical transmembrane segments spans residues 1474 to 1494, 1529 to 1549, 1554 to 1574, 1621 to 1641, 1644 to 1664, 1747 to 1767, 1783 to 1803, 1811 to 1831, and 1853 to 1873; these read FTTV…YVFL, FLVQ…ILEL, AIFS…TFSL, AFEV…DGGA, FVLL…APYI, LALY…FKLF, FLQG…IAMT, FACV…AITW, and AAMG…PFIS. Residues 1659 to 1691 form an HAT 3 repeat; that stretch reads LFAPYIFNPSGFEWQKTVEDFEDWVSWLMYKGG.

This sequence belongs to the glycosyltransferase 48 family.

The protein resides in the cell membrane. It carries out the reaction [(1-&gt;3)-beta-D-glucosyl](n) + UDP-alpha-D-glucose = [(1-&gt;3)-beta-D-glucosyl](n+1) + UDP + H(+). Functionally, involved in sporophytic and gametophytic development. Required for normal plant development and for the proper accumulation of callose at cell plates, cll walls and plasmodesmata. During pollen formation, required for the entry of microspores into mitosis. During plant growth and development, callose is found as a transitory component of the cell plate in dividing cells, is a major component of pollen mother cell walls and pollen tubes, and is found as a structural component of plasmodesmatal canals. Required for proper cell division and tissue patterning throughout plant organs, including stomatal patterning. The polypeptide is Callose synthase 10 (CALS10) (Arabidopsis thaliana (Mouse-ear cress)).